Here is an 82-residue protein sequence, read N- to C-terminus: RNA-binding protein Hfq (82 aa).

The Sm domain occupies 9–68 (DPYLNTLRKERVPVSIYLVNGIKLQGQIESFDQFVILLKNTVSQMVYKTAISTVVPSRPV).

Belongs to the Hfq family. Homohexamer.

Functionally, RNA chaperone that binds small regulatory RNA (sRNAs) and mRNAs to facilitate mRNA translational regulation in response to envelope stress, environmental stress and changes in metabolite concentrations. Also binds with high specificity to tRNAs. This is RNA-binding protein Hfq from Pseudomonas aeruginosa.